A 367-amino-acid polypeptide reads, in one-letter code: Quinolinate synthase (367 aa).

Iminosuccinate-binding residues include His-45 and Ser-62. Cys-109 contacts [4Fe-4S] cluster. Iminosuccinate contacts are provided by residues 140 to 142 and Ser-161; that span reads YVN. Position 229 (Cys-229) interacts with [4Fe-4S] cluster. Residues 255 to 257 and Thr-272 contribute to the iminosuccinate site; that span reads HPE. Cys-319 lines the [4Fe-4S] cluster pocket.

This sequence belongs to the quinolinate synthase family. Type 3 subfamily. [4Fe-4S] cluster is required as a cofactor.

It is found in the cytoplasm. The catalysed reaction is iminosuccinate + dihydroxyacetone phosphate = quinolinate + phosphate + 2 H2O + H(+). It functions in the pathway cofactor biosynthesis; NAD(+) biosynthesis; quinolinate from iminoaspartate: step 1/1. Functionally, catalyzes the condensation of iminoaspartate with dihydroxyacetone phosphate to form quinolinate. In Geobacillus sp. (strain WCH70), this protein is Quinolinate synthase.